The chain runs to 437 residues: Argininosuccinate lyase (437 aa).

The protein belongs to the lyase 1 family. Argininosuccinate lyase subfamily.

Its subcellular location is the cytoplasm. The catalysed reaction is 2-(N(omega)-L-arginino)succinate = fumarate + L-arginine. The protein operates within amino-acid biosynthesis; L-arginine biosynthesis; L-arginine from L-ornithine and carbamoyl phosphate: step 3/3. The chain is Argininosuccinate lyase from Clostridium acetobutylicum (strain ATCC 824 / DSM 792 / JCM 1419 / IAM 19013 / LMG 5710 / NBRC 13948 / NRRL B-527 / VKM B-1787 / 2291 / W).